The sequence spans 440 residues: D-serine dehydratase (440 aa).

Lysine 116 bears the N6-(pyridoxal phosphate)lysine mark.

The protein belongs to the serine/threonine dehydratase family. DsdA subfamily. Monomer. It depends on pyridoxal 5'-phosphate as a cofactor.

It catalyses the reaction D-serine = pyruvate + NH4(+). The sequence is that of D-serine dehydratase from Salmonella schwarzengrund (strain CVM19633).